The chain runs to 358 residues: Bi-functional coumaroyl CoA and feruloyl CoA ortho-hydroxylase F6H2-1-1 (358 aa).

One can recognise a Fe2OG dioxygenase domain in the interval 207–308; it reads GSRRININYY…RISVPVFVNP (102 aa). Residue Y216 coordinates 2-oxoglutarate. Fe cation-binding residues include H231, D233, and H289. 2-oxoglutarate contacts are provided by R299 and S301.

This sequence belongs to the iron/ascorbate-dependent oxidoreductase family. The cofactor is L-ascorbate. Requires Fe(2+) as cofactor. In terms of tissue distribution, mostly expressed in underground stems and stems, and, at low levels, in tubers, leaves and petioles.

The catalysed reaction is (E)-4-coumaroyl-CoA + 2-oxoglutarate + O2 = (E)-2,4-dihydroxycinnamoyl-CoA + succinate + CO2. It catalyses the reaction (E)-feruloyl-CoA + 2-oxoglutarate + O2 = (E)-6-hydroxyferuloyl-CoA + succinate + CO2. The protein operates within phenylpropanoid metabolism. In terms of biological role, 2-oxoglutarate (OG)- and Fe(II)-dependent dioxygenase (2OGD) involved in scopoletin and umbelliferone biosynthesis. Converts feruloyl CoA into 6'-hydroxyferuloyl CoA, and p-coumaroyl CoA into 2,4-dihydroxycinnamoyl-CoA, but has no activity with caffeoyl-CoA. This chain is Bi-functional coumaroyl CoA and feruloyl CoA ortho-hydroxylase F6H2-1-1, found in Ipomoea batatas (Sweet potato).